Consider the following 501-residue polypeptide: Phenylalanine--tRNA ligase alpha subunit (501 aa).

2 residues coordinate L-phenylalanine: Thr340 and Phe423. Glu425 contributes to the Mg(2+) binding site. Phe448 contributes to the L-phenylalanine binding site.

The protein belongs to the class-II aminoacyl-tRNA synthetase family. Phe-tRNA synthetase alpha subunit type 2 subfamily. In terms of assembly, tetramer of two alpha and two beta subunits. The cofactor is Mg(2+).

The protein localises to the cytoplasm. It carries out the reaction tRNA(Phe) + L-phenylalanine + ATP = L-phenylalanyl-tRNA(Phe) + AMP + diphosphate + H(+). The sequence is that of Phenylalanine--tRNA ligase alpha subunit from Methanococcus vannielii (strain ATCC 35089 / DSM 1224 / JCM 13029 / OCM 148 / SB).